The sequence spans 344 residues: Fructose-bisphosphate aldolase (344 aa).

Serine 53 contacts D-glyceraldehyde 3-phosphate. Aspartate 95 functions as the Proton donor in the catalytic mechanism. Residues histidine 96, aspartate 131, glutamate 161, and histidine 212 each contribute to the Zn(2+) site. Glycine 213 is a binding site for dihydroxyacetone phosphate. Zn(2+) is bound at residue histidine 252. Residues 253–255 (GGS) and 274–277 (NVDT) each bind dihydroxyacetone phosphate.

The protein belongs to the class II fructose-bisphosphate aldolase family. Zn(2+) serves as cofactor.

The enzyme catalyses beta-D-fructose 1,6-bisphosphate = D-glyceraldehyde 3-phosphate + dihydroxyacetone phosphate. The protein operates within carbohydrate degradation; glycolysis; D-glyceraldehyde 3-phosphate and glycerone phosphate from D-glucose: step 4/4. Catalyzes the aldol condensation of dihydroxyacetone phosphate (DHAP or glycerone-phosphate) with glyceraldehyde 3-phosphate (G3P) to form fructose 1,6-bisphosphate (FBP) in gluconeogenesis and the reverse reaction in glycolysis. The chain is Fructose-bisphosphate aldolase (fba) from Mycobacterium bovis (strain ATCC BAA-935 / AF2122/97).